The chain runs to 153 residues: Actin-related protein 2/3 complex subunit 5-like protein (153 aa).

Phosphoserine is present on serine 64.

It belongs to the ARPC5 family. May be a component of the Arp2/3 complex in which it may replace ARPC5.

The protein localises to the cytoplasm. It is found in the cytoskeleton. May function as component of the Arp2/3 complex which is involved in regulation of actin polymerization and together with an activating nucleation-promoting factor (NPF) mediates the formation of branched actin networks. The chain is Actin-related protein 2/3 complex subunit 5-like protein (ARPC5L) from Pongo abelii (Sumatran orangutan).